The following is a 78-amino-acid chain: Putative antitoxin VapB4 (78 aa).

It belongs to the UPF0330 family.

Its function is as follows. Possibly the antitoxin component of a type II toxin-antitoxin (TA) system. Its cognate toxin is VapC4 (Potential). This Pyrococcus furiosus (strain ATCC 43587 / DSM 3638 / JCM 8422 / Vc1) protein is Putative antitoxin VapB4 (vapB4).